The following is a 130-amino-acid chain: UPF0251 protein MmarC5_0986 (130 aa).

This sequence belongs to the UPF0251 family.

The protein is UPF0251 protein MmarC5_0986 of Methanococcus maripaludis (strain C5 / ATCC BAA-1333).